The primary structure comprises 278 residues: Myb/SANT-like DNA-binding domain-containing protein 1 (278 aa).

Residues 1–27 (MVRGAGPGPSLSALSHPTGASGMAAAE) are disordered. Residues 44–129 (RNWTDAEMRG…PDWPYYLAID (86 aa)) form the Myb-like domain. The tract at residues 138–168 (SCDGKLPDSQPPGPSTSQTEASLSPPAKSTP) is disordered.

In Homo sapiens (Human), this protein is Myb/SANT-like DNA-binding domain-containing protein 1 (MSANTD1).